The following is a 302-amino-acid chain: Polyadenylate-binding protein 2 (302 aa).

The span at 1–12 shows a compositional bias: low complexity; that stretch reads MAAAAAAAAAAG. The segment at 1–111 is disordered; the sequence is MAAAAAAAAA…EADPGDGAIE (111 aa). The residue at position 2 (Ala2) is an N-acetylalanine. Residues 2-141 form an interaction with SKIP region; sequence AAAAAAAAAA…LKELQNEVEK (140 aa). Arg17 is subject to Omega-N-methylarginine. Ser19 bears the Phosphoserine mark. Positions 30-47 are enriched in gly residues; the sequence is GAGGEAGEGDPGGAGDYG. Over residues 51–68 the composition is skewed to acidic residues; sequence ESEELEPGELLPEPEPEE. A Phosphoserine modification is found at Ser52. Residues 73-83 are compositionally biased toward pro residues; sequence PRAPPGAPGPG. A Phosphoserine modification is found at Ser91. A coiled-coil region spans residues 111 to 147; that stretch reads EDPELEAIKARVREMEEEAEKLKELQNEVEKQMNMSP. Residues 115-143 are stimulates PAPOLA; sequence LEAIKARVREMEEEAEKLKELQNEVEKQM. Ser146 and Ser231 each carry phosphoserine. In terms of domain architecture, RRM spans 168 to 245; it reads RSIYVGNVDY…RQIKVIPKRT (78 aa). An asymmetric dimethylarginine; alternate mark is found at Arg234, Arg255, and Arg259. 3 positions are modified to omega-N-methylarginine; alternate: Arg234, Arg255, and Arg259. Residues 255–302 are strong poly(A) affinity and self-association; it reads RGFPRSRYRARTTNYNSSRSRFYSGFNSRPRGRIYRGRARATSWYSPY. An asymmetric dimethylarginine mark is found at Arg261, Arg263, Arg265, Arg273, Arg275, Arg283, Arg285, Arg287, Arg290, Arg292, and Arg294. The tract at residues 282-302 is interaction with PAPOLA; that stretch reads SRPRGRIYRGRARATSWYSPY.

Monomer and homooligomer. Identified in a IGF2BP1-dependent mRNP granule complex containing untranslated mRNAs. Binds RNA as a monomer and oligomerizes when bound to poly(A). Interacts with PAPOLA, but only in presence of oligo(A) RNA. Interacts with NUDT21/CPSF5 and transportin. Associates in a ternary complex with CPSF4 and NS/NS1 and interaction with NS/NS1, blocks nuclear export of host cell mRNAs. Associates in a single complex with SKIP and MYOD1 and interacts with SKIP in differentiated myocytes. May interact with SETX. Interacts (via RRM domain and C-terminal arginine-rich region) with ZFP36 (via hypophosphorylated form); this interaction occurs in the nucleus in a RNA-independent manner, decreases in presence of single-stranded poly(A) RNA-oligomer and in a p38-dependent-manner and may down-regulated RNA poly(A) polymerase activity. Component of the poly(A) tail exosome targeting (PAXT) complex composed of PABPN1, ZFC3H1 and MTREX. Interacts with ZFC3H1 in a RNase-insensitive manner. Interacts with FRG1. Interacts with ZC3H11A. In terms of processing, arginine dimethylation is asymmetric and involves PRMT1 and PRMT3. It does not influence the RNA binding properties. As to expression, ubiquitous.

It localises to the cytoplasm. The protein localises to the nucleus. Its subcellular location is the nucleus speckle. Functionally, involved in the 3'-end formation of mRNA precursors (pre-mRNA) by the addition of a poly(A) tail of 200-250 nt to the upstream cleavage product. Stimulates poly(A) polymerase (PAPOLA) conferring processivity on the poly(A) tail elongation reaction and also controls the poly(A) tail length. Increases the affinity of poly(A) polymerase for RNA. Is also present at various stages of mRNA metabolism including nucleocytoplasmic trafficking and nonsense-mediated decay (NMD) of mRNA. Cooperates with SKIP to synergistically activate E-box-mediated transcription through MYOD1 and may regulate the expression of muscle-specific genes. Binds to poly(A) and to poly(G) with high affinity. May protect the poly(A) tail from degradation. Subunit of the trimeric poly(A) tail exosome targeting (PAXT) complex, a complex that directs a subset of long and polyadenylated poly(A) RNAs for exosomal degradation. The RNA exosome is fundamental for the degradation of RNA in eukaryotic nuclei. Substrate targeting is facilitated by its cofactor MTREX, which links to RNA-binding protein adapters. The sequence is that of Polyadenylate-binding protein 2 (Pabpn1) from Mus musculus (Mouse).